Reading from the N-terminus, the 268-residue chain is Phosphatidylglycerol--prolipoprotein diacylglyceryl transferase (268 aa).

7 helical membrane passes run 23-43 (IGLRWYGLMYLLGFVFARWLA), 62-82 (LLFNGFMGVFIGGRVGDVFFY), 97-117 (VWEGGMSFHGGLIGVIVAMIW), 132-152 (FVAPLIPFGLGLGRIGNFINL), 179-199 (SQLYEAFLEGLVLFAILNIFI), 206-226 (ASVAGLFLIGYGVFRFIVEYV), and 241-261 (GQALCLPMIIGGAFIMAWAYS). Arginine 145 is a binding site for a 1,2-diacyl-sn-glycero-3-phospho-(1'-sn-glycerol).

This sequence belongs to the Lgt family.

It is found in the cell inner membrane. The catalysed reaction is L-cysteinyl-[prolipoprotein] + a 1,2-diacyl-sn-glycero-3-phospho-(1'-sn-glycerol) = an S-1,2-diacyl-sn-glyceryl-L-cysteinyl-[prolipoprotein] + sn-glycerol 1-phosphate + H(+). Its pathway is protein modification; lipoprotein biosynthesis (diacylglyceryl transfer). Catalyzes the transfer of the diacylglyceryl group from phosphatidylglycerol to the sulfhydryl group of the N-terminal cysteine of a prolipoprotein, the first step in the formation of mature lipoproteins. The protein is Phosphatidylglycerol--prolipoprotein diacylglyceryl transferase of Haemophilus influenzae (strain PittEE).